The chain runs to 190 residues: Putative cyclic ADP-D-ribose synthase ThsB (190 aa).

The protein belongs to the Thoeris B TIR-like family. As to quaternary structure, homodimer.

It is found in the cytoplasm. Activated upon phage infection. Functionally, TIR-like domain-containing component of the Thoeris antiviral defense system, composed of ThsA and ThsB. Expression of ThsA and ThsB in B.subtilis (strain BEST7003) confers resistance to phages SBSphiC, SBSphiJ and SPO1. Phage infection activates this protein, generating a signal molecule that in turn activates ThsA. Its function is as follows. Probably hydrolyzes NAD(+) to make a cyclic ADP-D-ribose (cADPR) signaling molecule; might make 3'cADPR. The chain is Putative cyclic ADP-D-ribose synthase ThsB from Bacillus amyloliquefaciens (strain Y2) (Bacillus amyloliquefaciens subsp. plantarum (strain B9601-Y2)).